The primary structure comprises 1436 residues: tRNA (guanosine(18)-2'-O)-methyltransferase (1436 aa).

Residues Leu1365–Gln1367, Gly1389, and Ile1409–Met1418 each bind S-adenosyl-L-methionine.

This sequence belongs to the class IV-like SAM-binding methyltransferase superfamily. RNA methyltransferase TrmH family.

The protein resides in the cytoplasm. The enzyme catalyses guanosine(18) in tRNA + S-adenosyl-L-methionine = 2'-O-methylguanosine(18) in tRNA + S-adenosyl-L-homocysteine + H(+). Its function is as follows. S-adenosyl-L-methionine-dependent 2'-O-ribose methyltransferase that catalyzes the formation of 2'-O-methylguanosine at position 18 (Gm18) in various tRNAs. In Saccharomyces cerevisiae (strain ATCC 204508 / S288c) (Baker's yeast), this protein is tRNA (guanosine(18)-2'-O)-methyltransferase.